The sequence spans 635 residues: Early transcription factor 70 kDa subunit (635 aa).

The 154-residue stretch at 32–185 (RSIIDENKSV…SNIISLMSDE (154 aa)) folds into the Helicase ATP-binding domain. Position 45 to 52 (45 to 52 (HIMGSGKT)) interacts with ATP. Residues 135–138 (DEAH) carry the DEXH box motif. In terms of domain architecture, Helicase C-terminal spans 326-505 (KFKYFIGKIT…TLPFDIKKLL (180 aa)).

The protein belongs to the helicase family. VETF subfamily. Heterodimer of a 70 kDa and a 82 kDa subunit.

The protein localises to the virion. Acts with RNA polymerase to initiate transcription from early gene promoters. A DNA-dependent ATPase activity is associated with VETF. This is Early transcription factor 70 kDa subunit (VETFS) from Erythrocebus patas (Red guenon).